The primary structure comprises 67 residues: Small ribosomal subunit protein bS21 (67 aa).

This sequence belongs to the bacterial ribosomal protein bS21 family.

In Acidiphilium cryptum (strain JF-5), this protein is Small ribosomal subunit protein bS21.